The chain runs to 121 residues: Basic phospholipase A2 VRV-PL-VIIIa (121 aa).

Cystine bridges form between C26-C115, C28-C44, C43-C95, C49-C121, C50-C88, C57-C81, and C75-C86. Y27, G29, and G31 together coordinate Ca(2+). H47 is a catalytic residue. D48 contacts Ca(2+). Residue D89 is part of the active site.

The protein belongs to the phospholipase A2 family. Group II subfamily. D49 sub-subfamily. Monomer. Ca(2+) serves as cofactor. As to expression, expressed by the venom gland.

It localises to the secreted. The enzyme catalyses a 1,2-diacyl-sn-glycero-3-phosphocholine + H2O = a 1-acyl-sn-glycero-3-phosphocholine + a fatty acid + H(+). Oxyphenbutazone (OPB), anisic acid and atropine inhibit the enzymatic activity by binding at the substrate-binding site. P-coumaric acid, resveratrol, spermidine, corticosterone and gramine derivative inhibit the enzymatic activity by binding at the substrate-binding site. Its function is as follows. Snake venom phospholipase A2 (PLA2) that shows weak neurotoxicity and medium anticoagulant effects by binding to factor Xa (F10) and inhibiting the prothrombinase activity (IC(50) is 130 nM). It also damages vital organs such as lung, liver and kidney, displays edema-inducing activities when injected into the foot pads of mice and induces necrosis of muscle cells when injected into the thigh muscle. Has a low enzymatic activity. PLA2 catalyzes the calcium-dependent hydrolysis of the 2-acyl groups in 3-sn-phosphoglycerides. This chain is Basic phospholipase A2 VRV-PL-VIIIa, found in Daboia russelii (Russel's viper).